The chain runs to 365 residues: Tetraacyldisaccharide 4'-kinase (365 aa).

68 to 75 (VVGGAGKT) provides a ligand contact to ATP.

The protein belongs to the LpxK family.

It carries out the reaction a lipid A disaccharide + ATP = a lipid IVA + ADP + H(+). It functions in the pathway glycolipid biosynthesis; lipid IV(A) biosynthesis; lipid IV(A) from (3R)-3-hydroxytetradecanoyl-[acyl-carrier-protein] and UDP-N-acetyl-alpha-D-glucosamine: step 6/6. Its function is as follows. Transfers the gamma-phosphate of ATP to the 4'-position of a tetraacyldisaccharide 1-phosphate intermediate (termed DS-1-P) to form tetraacyldisaccharide 1,4'-bis-phosphate (lipid IVA). This chain is Tetraacyldisaccharide 4'-kinase, found in Chlamydia pneumoniae (Chlamydophila pneumoniae).